We begin with the raw amino-acid sequence, 179 residues long: NADH-quinone oxidoreductase subunit B (179 aa).

[4Fe-4S] cluster is bound by residues Cys-35, Cys-36, Cys-100, and Cys-129.

This sequence belongs to the complex I 20 kDa subunit family. NDH-1 is composed of 14 different subunits. Subunits NuoB, C, D, E, F, and G constitute the peripheral sector of the complex. [4Fe-4S] cluster serves as cofactor.

The protein localises to the cell inner membrane. It catalyses the reaction a quinone + NADH + 5 H(+)(in) = a quinol + NAD(+) + 4 H(+)(out). Functionally, NDH-1 shuttles electrons from NADH, via FMN and iron-sulfur (Fe-S) centers, to quinones in the respiratory chain. Couples the redox reaction to proton translocation (for every two electrons transferred, four hydrogen ions are translocated across the cytoplasmic membrane), and thus conserves the redox energy in a proton gradient. In Aquifex aeolicus (strain VF5), this protein is NADH-quinone oxidoreductase subunit B.